A 512-amino-acid polypeptide reads, in one-letter code: 2-isopropylmalate synthase (512 aa).

Positions 5-268 (LIIFDTTLRD…DLGIATQHIL (264 aa)) constitute a Pyruvate carboxyltransferase domain. Mn(2+) contacts are provided by aspartate 14, histidine 202, histidine 204, and asparagine 239. Residues 394-512 (GFVSLFQQSE…NKADRVAAQG (119 aa)) form a regulatory domain region.

The protein belongs to the alpha-IPM synthase/homocitrate synthase family. LeuA type 1 subfamily. In terms of assembly, homodimer. It depends on Mn(2+) as a cofactor.

Its subcellular location is the cytoplasm. It carries out the reaction 3-methyl-2-oxobutanoate + acetyl-CoA + H2O = (2S)-2-isopropylmalate + CoA + H(+). The protein operates within amino-acid biosynthesis; L-leucine biosynthesis; L-leucine from 3-methyl-2-oxobutanoate: step 1/4. Its function is as follows. Catalyzes the condensation of the acetyl group of acetyl-CoA with 3-methyl-2-oxobutanoate (2-ketoisovalerate) to form 3-carboxy-3-hydroxy-4-methylpentanoate (2-isopropylmalate). The chain is 2-isopropylmalate synthase from Verminephrobacter eiseniae (strain EF01-2).